We begin with the raw amino-acid sequence, 240 residues long: Phosducin-like protein 2 (240 aa).

The Phosducin domain maps to glutamine 38 to alanine 201. The segment at phenylalanine 89–lysine 240 is thioredoxin fold.

Belongs to the phosducin family. Interacts with the CCT chaperonin complex and actin. In terms of tissue distribution, testis-specific (at protein level).

It is found in the endoplasmic reticulum. Essential for male fertility, spermiogenesis and acrosome formation. This is Phosducin-like protein 2 (Pdcl2) from Mus musculus (Mouse).